The following is an 85-amino-acid chain: Translational regulator CsrA (85 aa).

This sequence belongs to the CsrA/RsmA family. Homodimer; the beta-strands of each monomer intercalate to form a hydrophobic core, while the alpha-helices form wings that extend away from the core.

Its subcellular location is the cytoplasm. In terms of biological role, a translational regulator that binds mRNA to regulate translation initiation and/or mRNA stability. Usually binds in the 5'-UTR at or near the Shine-Dalgarno sequence preventing ribosome-binding, thus repressing translation. Its main target seems to be the major flagellin gene, while its function is anatagonized by FliW. This Leifsonia xyli subsp. xyli (strain CTCB07) protein is Translational regulator CsrA.